A 352-amino-acid chain; its full sequence is S-adenosylmethionine:tRNA ribosyltransferase-isomerase (352 aa).

This sequence belongs to the QueA family. Monomer.

The protein localises to the cytoplasm. The catalysed reaction is 7-aminomethyl-7-carbaguanosine(34) in tRNA + S-adenosyl-L-methionine = epoxyqueuosine(34) in tRNA + adenine + L-methionine + 2 H(+). It participates in tRNA modification; tRNA-queuosine biosynthesis. Its function is as follows. Transfers and isomerizes the ribose moiety from AdoMet to the 7-aminomethyl group of 7-deazaguanine (preQ1-tRNA) to give epoxyqueuosine (oQ-tRNA). This is S-adenosylmethionine:tRNA ribosyltransferase-isomerase from Syntrophomonas wolfei subsp. wolfei (strain DSM 2245B / Goettingen).